A 506-amino-acid chain; its full sequence is Galactose/methyl galactoside import ATP-binding protein MglA (506 aa).

2 ABC transporter domains span residues 14-249 and 264-506; these read LEMS…VGRS and VILE…SLHL. 46–53 lines the ATP pocket; sequence GENGAGKS.

It belongs to the ABC transporter superfamily. Galactose/methyl galactoside importer (TC 3.A.1.2.3) family. As to quaternary structure, the complex is composed of one ATP-binding protein (MglA), two transmembrane proteins (MglC) and a solute-binding protein (MglB).

It is found in the cell inner membrane. It catalyses the reaction D-galactose(out) + ATP + H2O = D-galactose(in) + ADP + phosphate + H(+). The catalysed reaction is methyl beta-D-galactoside(out) + ATP + H2O = methyl beta-D-galactoside(in) + ADP + phosphate + H(+). In terms of biological role, part of the ABC transporter complex MglABC involved in galactose/methyl galactoside import. Responsible for energy coupling to the transport system. The polypeptide is Galactose/methyl galactoside import ATP-binding protein MglA (Escherichia coli (strain K12)).